A 792-amino-acid polypeptide reads, in one-letter code: Phenylalanine--tRNA ligase beta subunit (792 aa).

Residues 39-147 (GESLGQVVVA…DDAPVGQALA (109 aa)) enclose the tRNA-binding domain. The 76-residue stretch at 400-475 (PQPARIRLRR…RIHGYDRVPT (76 aa)) folds into the B5 domain. Positions 453, 459, 462, and 463 each coordinate Mg(2+). Residues 698-791 (SRFPSVRRDL…IEREHRARIR (94 aa)) enclose the FDX-ACB domain.

The protein belongs to the phenylalanyl-tRNA synthetase beta subunit family. Type 1 subfamily. In terms of assembly, tetramer of two alpha and two beta subunits. The cofactor is Mg(2+).

It is found in the cytoplasm. The catalysed reaction is tRNA(Phe) + L-phenylalanine + ATP = L-phenylalanyl-tRNA(Phe) + AMP + diphosphate + H(+). The chain is Phenylalanine--tRNA ligase beta subunit from Xanthomonas euvesicatoria pv. vesicatoria (strain 85-10) (Xanthomonas campestris pv. vesicatoria).